The sequence spans 428 residues: Serine--tRNA ligase (428 aa).

231–233 (TAE) serves as a coordination point for L-serine. ATP is bound by residues 262 to 264 (RRE) and Val-278. An L-serine-binding site is contributed by Glu-285. Residue 349–352 (EVSS) participates in ATP binding. Residue Ser-384 coordinates L-serine.

Belongs to the class-II aminoacyl-tRNA synthetase family. Type-1 seryl-tRNA synthetase subfamily. In terms of assembly, homodimer. The tRNA molecule binds across the dimer.

The protein resides in the cytoplasm. It catalyses the reaction tRNA(Ser) + L-serine + ATP = L-seryl-tRNA(Ser) + AMP + diphosphate + H(+). The enzyme catalyses tRNA(Sec) + L-serine + ATP = L-seryl-tRNA(Sec) + AMP + diphosphate + H(+). The protein operates within aminoacyl-tRNA biosynthesis; selenocysteinyl-tRNA(Sec) biosynthesis; L-seryl-tRNA(Sec) from L-serine and tRNA(Sec): step 1/1. Catalyzes the attachment of serine to tRNA(Ser). Is also able to aminoacylate tRNA(Sec) with serine, to form the misacylated tRNA L-seryl-tRNA(Sec), which will be further converted into selenocysteinyl-tRNA(Sec). The chain is Serine--tRNA ligase from Chlamydia muridarum (strain MoPn / Nigg).